A 261-amino-acid chain; its full sequence is Epidermal growth factor-binding protein type B (261 aa).

A signal peptide spans 1 to 16 (MWFLILFLALSLGGID). A propeptide spans 17 to 24 (AAPPLQSR) (activation peptide). The Peptidase S1 domain maps to 25 to 258 (VVGGFNCKKN…FNSWIKDTMM (234 aa)). 5 disulfide bridges follow: Cys31–Cys173, Cys50–Cys66, Cys152–Cys219, Cys184–Cys198, and Cys209–Cys234. Residue His65 is the Charge relay system of the active site. The N-linked (GlcNAc...) asparagine glycan is linked to Asn102. Catalysis depends on Asp120, which acts as the Charge relay system. The active-site Charge relay system is the Ser213.

The protein belongs to the peptidase S1 family. Kallikrein subfamily.

It carries out the reaction Hydrolyzes mouse Ren2 protein (a species of prorenin present in the submandibular gland) on the carboxy side of the arginine residue at the Lys-Arg-|- pair in the N-terminus, to yield mature renin.. In terms of biological role, cleaves REN2 at a dibasic site to yield mature renin. The protein is Epidermal growth factor-binding protein type B (Egfbp2) of Mus musculus (Mouse).